We begin with the raw amino-acid sequence, 66 residues long: Nigrocin-2ISa (66 aa).

Positions 1-22 (MFTLKKSMLLLFFLGTINLSLC) are cleaved as a signal peptide. The propeptide at 23–43 (QEERDAEEERRDEDNAKMEEI) is removed in mature form. Residues C60 and C66 are joined by a disulfide bond.

As to expression, expressed by the skin glands.

Its subcellular location is the secreted. Has antimicrobial activity against Gram-negative bacterium E.coli ATCC 8739 (MIC=25 ug), against Gram positive bacteria S.aureus ATCC 6538 (MIC=3.1 ug), methicillin-resistant S.aureus ATCC 43300 (MIC=12.5 ug), B.subtilis ATCC 6633 (MIC=12.5 ug) and against fungus C.albicans ATCC 90028 (MIC=50 ug). The polypeptide is Nigrocin-2ISa (Odorrana ishikawae (Ishikawa's frog)).